The following is a 290-amino-acid chain: Phosphatidylglycerol--prolipoprotein diacylglyceryl transferase (290 aa).

Transmembrane regions (helical) follow at residues 21-41, 60-80, 96-116, 124-144, 199-219, 226-246, and 259-279; these read VSLHWYGLMYLVGFVFAMWLA, LLYAGFLGVFVGGRVGYVLFY, WDGGMSFHGGLIGVICVMLWF, FFQVADFIAPLIPFGLGAGRL, SQLYEMILEGVVLFIILNLFI, GSVSGLFLIGYGAFRIIVECF, and VISMGQILSVPMILAGIIMMI. Residue Arg143 participates in a 1,2-diacyl-sn-glycero-3-phospho-(1'-sn-glycerol) binding.

This sequence belongs to the Lgt family.

The protein resides in the cell inner membrane. The catalysed reaction is L-cysteinyl-[prolipoprotein] + a 1,2-diacyl-sn-glycero-3-phospho-(1'-sn-glycerol) = an S-1,2-diacyl-sn-glyceryl-L-cysteinyl-[prolipoprotein] + sn-glycerol 1-phosphate + H(+). It participates in protein modification; lipoprotein biosynthesis (diacylglyceryl transfer). Functionally, catalyzes the transfer of the diacylglyceryl group from phosphatidylglycerol to the sulfhydryl group of the N-terminal cysteine of a prolipoprotein, the first step in the formation of mature lipoproteins. This chain is Phosphatidylglycerol--prolipoprotein diacylglyceryl transferase, found in Yersinia enterocolitica serotype O:8 / biotype 1B (strain NCTC 13174 / 8081).